Reading from the N-terminus, the 226-residue chain is Cold-regulated 413 inner membrane protein 2, chloroplastic (226 aa).

The transit peptide at 1 to 76 directs the protein to the chloroplast; sequence MASLCLSSSR…RKRGSSVVCY (76 aa). Over 77–79 the chain is Stromal; that stretch reads ATP. The chain crosses the membrane as a helical span at residues 80–100; that stretch reads MLSVHNLQWISTISCVALMFA. At 101–103 the chain is on the chloroplast intermembrane side; that stretch reads RGT. The chain crosses the membrane as a helical span at residues 104-124; it reads GIHKSFVVPLFALQAPMGIVS. Residues 125–129 are Stromal-facing; sequence WMKGE. Residues 130-150 form a helical membrane-spanning segment; it reads YGIWAAFLALLTRLFFSFPVE. The Chloroplast intermembrane segment spans residues 151-152; the sequence is LE. Residues 153 to 173 form a helical membrane-spanning segment; that stretch reads LPFIALLLVIVAPYQVMSIRG. At 174–176 the chain is on the stromal side; sequence KQE. The helical transmembrane segment at 177–197 threads the bilayer; it reads GAILSLAISCFLAFQHFSRAG. The Chloroplast intermembrane segment spans residues 198–205; the sequence is TLQKAFDQ. A helical transmembrane segment spans residues 206 to 226; the sequence is NSVLATVAIIGVTVVSFLFLI.

The protein belongs to the Cold-regulated 413 protein family.

The protein localises to the plastid. It is found in the chloroplast inner membrane. This chain is Cold-regulated 413 inner membrane protein 2, chloroplastic (COR413IM2), found in Arabidopsis thaliana (Mouse-ear cress).